The sequence spans 461 residues: Protein naked cuticle homolog 2 (461 aa).

Positions 1–106 (MGKFQSKHAA…DGEKAASREG (106 aa)) are disordered. Glycine 2 carries N-myristoyl glycine lipidation. Composition is skewed to basic and acidic residues over residues 34-73 (RGAEETDRRAGSGVEHRSRDKQELLNGDPKEGPFWDDKGS) and 97-106 (DGEKAASREG). An interaction with DVL1, DVL2 and DVL3 region spans residues 121 to 186 (QCDVSVEEDN…LRVKLTVSPE (66 aa)). The 36-residue stretch at 127–162 (EEDNRQEWTFTLYDFDNSGKVTREDMSSLMHTIYEV) folds into the EF-hand domain. Positions 140, 142, 144, 146, and 151 each coordinate Ca(2+). Disordered stretches follow at residues 176 to 205 (TLRVKLTVSPEPSSKKECPLTGQDREPTRG), 263 to 302 (YTSKFGPGSPPEQARQEHHGRATHIPSRSRSQESDAHAIH), 321 to 359 (TRALAAQPRIKGQEKQFLRSPKGPGKPLGTPGSGKPGKA), 372 to 414 (SAQD…GQPT), and 441 to 461 (HEHHHHHEHHHHHHHHHFHPS). Residues 188-205 (SSKKECPLTGQDREPTRG) are compositionally biased toward basic and acidic residues. Residues 307-396 (QVLAEHVIPA…PPQPYGHKRY (90 aa)) are interaction with TGFA. Positions 341–350 (PKGPGKPLGT) are enriched in low complexity. A compositionally biased stretch (pro residues) spans 380-390 (PQPPPQPPPQP).

Belongs to the NKD family. As to quaternary structure, interacts with RNF25, TGFA (via cytoplasmic domain), and PPP2R3A. Interacts with DVL1, DVL2 and DVL3. Post-translationally, ubiquitinated, leading to rapid proteasomal degradation. Interaction with TGFA interferes with RNF25 binding and protects against ubiquitination mediated by RNF25. As to expression, expressed in the cecum, colon, esophagus, ileum, jejunum, skin and stomach.

The protein localises to the cell membrane. It is found in the cytoplasm. The protein resides in the cytoplasmic vesicle. Its function is as follows. Cell autonomous antagonist of the canonical Wnt signaling pathway. May activate a second Wnt signaling pathway that controls planar cell polarity. Required for processing of TGFA and for targeting of TGFA to the basolateral membrane of polarized epithelial cells. This is Protein naked cuticle homolog 2 (Nkd2) from Mus musculus (Mouse).